The sequence spans 866 residues: Protein aubergine (866 aa).

At Met1 the chain carries N-acetylmethionine. A disordered region spans residues 1 to 61; that stretch reads MNLPPNPVIA…GGGDAQVGPS (61 aa). 4 positions are modified to symmetric dimethylarginine: Arg11, Arg13, Arg15, and Arg17. Over residues 46 to 56 the composition is skewed to gly residues; the sequence is ASGGNGGGGDA. The PAZ domain maps to 281-390; that stretch reads TLYNILSDAI…IIPELARATG (110 aa). The Piwi domain maps to 555 to 852; it reads IVMVVMRSPN…LAFLVAESIN (298 aa).

Belongs to the argonaute family. Piwi subfamily. In terms of assembly, component of the ping-pong piRNA processing (4P) complex consisting of krimp, aub and AGO3. Interacts (via N-terminus when symmetrically dimethylated on arginine residues) with krimp (via tudor domain); this interaction requires methylation of at least one N-terminal arginie residue. Interacts with vas and AGO3. May form part of a piRNA processing complex consisting of tud, aub and AGO3. Interacts (when symmetrically dimethylated on arginine residues) with tud; methylation and/or interaction requires association with piRNA. Interacts (via N-terminus and when associated with piRNA) with csul/PRMT5; the interaction recruits the PRMT5 methylosome complex to modify N-terminal arginines by symmetrical dimethylation but involves residues other than the arginines to be modified. Forms a complex with smg, twin, AGO3, nanos mRNA and piRNAs that targets the nanos 3'-untranslated region, in early embryos. Interacts with nanos mRNA and rump (in an RNA-dependent manner). Interacts with papi and vret. Interacts with me31B. In terms of processing, symmetrical dimethylation of arginines (sDMA) on Arg-11, Arg-13 and/or Arg-15 by csul/PRMT5/DART5, is required for binding to tud, localization to the pole plasm and association with the correct piRNAs. SDMA on Arg-11, Arg-13, Arg-15 and/or Arg-17 is required for binding to krimp and stable recruitment to subregions of the nuage. Methylation state does not affect protein stability. SDMA plays an important role in ping-pong amplification of piRNAs and is essential for function in vivo. Methylation state functions as an indicator of its piRNA binding state. PiRNA binding promotes sDMA modification; piRNA binding induces a conformational change that exposes the N-terminal arginines, making them available to the methylosome complex. In terms of tissue distribution, expressed in ovary. In the germarium, found in germline stem and cyst cells. In egg chambers from stage 6, expressed both in nurse cells and oocytes. In embryos, accumulates in the pole cells, although low expression is detected throughout the entire embryo. In testis, expressed in germline stem cells, gonialblast and spermatogonia cells (at protein level). In the adult brain, expressed in the ellipsoid body, the mushroom body subdivision in the peduncle and the cell body layer. Expressed specifically in alpha'/beta' and gamma neurons.

It localises to the cytoplasm. The protein localises to the cytosol. It is found in the perinuclear region. Its subcellular location is the cytoplasmic ribonucleoprotein granule. Component of the perinuclear meiotic nuage, a germline-specific subcellular membraneless ribonucleoprotein compartment involved in production of transposable element-repressing Piwi-interacting RNA (piRNA)-induced silencing complexes (piRISCs), which are essential for maintaining germline integrity during oogenesis; essential for the formation and/or structural integrity of nuage particles. Acts via the Piwi-interacting RNA (piRNA) metabolic process, which mediates the repression of transposable elements during meiosis by forming complexes composed of piRNAs and Piwi proteins and governs the methylation and subsequent repression of transposons. Directly binds piRNAs, a class of 24 to 30 nucleotide RNAs that are generated by a Dicer-independent mechanism and are primarily derived from transposons and other repeated sequence elements. Shows RNA cleavage or slicer activity; including aub-piRNA complexes from ovary and testis. When loaded with guide piRNAs recognizes and cleaves complementary RNAs to repress their expression and produce complementary piRNAs. Together with Piwi protein AGO3 recruited to subregions of the perinuclear nuage by krimp, which coordinates their activity in the ping-pong amplification step of secondary piRNA biogenesis. Krimp recruits piRNA bound aub and unbound AGO3, bringing them into close proximity to facilitate the loading onto AGO3 of freshly cut piRNAs generated by aub cleavage of target sequences; krimp recognizes the piRNA loading state of the Piwi proteins via symmetrically dimethylated arginine modification in their N-terminus. Important for asymmetric ping-pong amplification to bias production towards antisense piRNAs capable of silencing transposable elements. Required for the localization of mael and krimp to the meiotic nuage. In ovary, associates predominantly with antisense piRNAs that contain uridine at their 5' end. In testis, associates with Su(Ste) antisense piRNAs (most abundant class of piRNAs found in complex with aub in testes) and negatively regulates Ste expression, most likely by cleaving its transcripts. Also in testis, may repress translation of vas when associated with a piRNA derived from chromosome X, termed AT-chX-1, whose sequence shows strong complementarity to vas mRNA. Involved in repression of long interspersed nuclear elements (LINEs) including HeT-A, I-element and TART LINEs. Repression of specialized telomeric retroelements HeT-A and TART is involved in telomere regulation; Drosophila telomeres being maintained by transposition of specialized telomeric retroelements. Also involved in telomeric trans-silencing, a repression mechanism by which a transposon or a transgene inserted in subtelomeric heterochromatin has the capacity to repress in trans, in the female germline, a homologous transposon, or transgene located in euchromatin. Involved in the suppression of meiotic drive of sex chromosomes and autosomes. Involved in transposon silencing in the adult brain. Required for dorsal-ventral as well as anterior-posterior patterning of the egg. Required during oogenesis for primordial germ cell formation and activation of RNA interference. During early oogenesis, required for osk mRNA silencing and polarization of the microtubule cytoskeleton. During mid-oogenesis, required for osk mRNA localization to the posterior pole and efficient translation of osk and grk. During embryogenesis, required for posterior localization of nanos (nos) mRNA, independently of osk, and pole cell formation. Forms a complex with smg, twin, AGO3 and specific piRNAs that targets nanos mRNA (and probably other maternal mRNAS) for deadenylation promoting its decay during early embryogenesis. The chain is Protein aubergine from Drosophila melanogaster (Fruit fly).